The primary structure comprises 327 residues: MAVADNPFSMSTMFNALPNPKGISGSIPPPGFAPRASATPLHAALFNLMTDGDGVSYFKEMISNSDKTELQRMASLLTSDSDYFMSIVTTKFGSRRVQKLLGKSDDVDAFFCAAILRRFLHITTDKYASYVTIRAMVVFDKVMKKALYERILYHALDLACDQHGCIALNDIITDADDPYYRDQLLELVASNALRLSNDASGNFVVQHVLTLYDSRCIHNIAVNLYGQCIELSFKKYGSYIVEKLLEVEESMVVVVVELLGCDGDRLMRLARNEFGNFVVVKALRFTKMSRMDLFWGLVQKLMPFIRLLRRSHGSNIANILDSFRLRC.

A PUM-HD domain is found at Met-1 to Arg-324. Pumilio repeat units follow at residues Ser-79–Ala-114, Ile-115–Glu-149, Arg-150–Leu-185, Glu-186–Val-222, Asn-223–Gly-260, and Cys-261–Trp-295.

It is found in the cytoplasm. Its function is as follows. Sequence-specific RNA-binding protein that regulates translation and mRNA stability by binding the 3'-UTR of target mRNAs. In Arabidopsis thaliana (Mouse-ear cress), this protein is Pumilio homolog 18 (APUM18).